The following is a 1234-amino-acid chain: ATP-dependent helicase/nuclease subunit A (1234 aa).

One can recognise a UvrD-like helicase ATP-binding domain in the interval 9 to 482; sequence STWTDDQWEA…IDLNKNFRSR (474 aa). 30-37 lines the ATP pocket; that stretch reads AAAGSGKT. In terms of domain architecture, UvrD-like helicase C-terminal spans 509 to 800; that stretch reads QAELKLGASY…RMMTIHSSKG (292 aa).

Belongs to the helicase family. AddA subfamily. As to quaternary structure, heterodimer of AddA and AddB/RexB. Mg(2+) serves as cofactor.

The enzyme catalyses Couples ATP hydrolysis with the unwinding of duplex DNA by translocating in the 3'-5' direction.. The catalysed reaction is ATP + H2O = ADP + phosphate + H(+). Functionally, the heterodimer acts as both an ATP-dependent DNA helicase and an ATP-dependent, dual-direction single-stranded exonuclease. Recognizes the chi site generating a DNA molecule suitable for the initiation of homologous recombination. The AddA nuclease domain is required for chi fragment generation; this subunit has the helicase and 3' -&gt; 5' nuclease activities. The polypeptide is ATP-dependent helicase/nuclease subunit A (Bacillus pumilus (strain SAFR-032)).